The sequence spans 342 residues: Glucokinase (342 aa).

Position 15–20 (15–20 (GDVGGT)) interacts with ATP.

This sequence belongs to the bacterial glucokinase family.

It is found in the cytoplasm. The enzyme catalyses D-glucose + ATP = D-glucose 6-phosphate + ADP + H(+). The protein is Glucokinase of Ralstonia nicotianae (strain ATCC BAA-1114 / GMI1000) (Ralstonia solanacearum).